Here is a 255-residue protein sequence, read N- to C-terminus: tRNA (guanine-N(1)-)-methyltransferase (255 aa).

S-adenosyl-L-methionine-binding positions include Gly-117 and 137–142 (LGDFVL).

The protein belongs to the RNA methyltransferase TrmD family. As to quaternary structure, homodimer.

It is found in the cytoplasm. The catalysed reaction is guanosine(37) in tRNA + S-adenosyl-L-methionine = N(1)-methylguanosine(37) in tRNA + S-adenosyl-L-homocysteine + H(+). Functionally, specifically methylates guanosine-37 in various tRNAs. The sequence is that of tRNA (guanine-N(1)-)-methyltransferase from Paraburkholderia phymatum (strain DSM 17167 / CIP 108236 / LMG 21445 / STM815) (Burkholderia phymatum).